Consider the following 78-residue polypeptide: Exodeoxyribonuclease 7 small subunit (78 aa).

Belongs to the XseB family. Heterooligomer composed of large and small subunits.

It localises to the cytoplasm. The enzyme catalyses Exonucleolytic cleavage in either 5'- to 3'- or 3'- to 5'-direction to yield nucleoside 5'-phosphates.. Bidirectionally degrades single-stranded DNA into large acid-insoluble oligonucleotides, which are then degraded further into small acid-soluble oligonucleotides. This chain is Exodeoxyribonuclease 7 small subunit, found in Paracoccus zeaxanthinifaciens.